The chain runs to 270 residues: Sugar phosphatase YidA (270 aa).

Catalysis depends on Asp9, which acts as the Nucleophile. Mg(2+) is bound at residue Asp9. Met10 is a phosphate binding site. Asp11 provides a ligand contact to Mg(2+). Residues 43 to 44 (TG) and Lys197 each bind phosphate. Asp220 provides a ligand contact to Mg(2+). A phosphate-binding site is contributed by Asn223.

The protein belongs to the HAD-like hydrolase superfamily. Cof family. In terms of assembly, homodimer. The cofactor is Mg(2+).

It carries out the reaction sugar phosphate + H2O = sugar + phosphate.. Functionally, catalyzes the dephosphorylation of different sugar phosphates. This Escherichia coli O6:H1 (strain CFT073 / ATCC 700928 / UPEC) protein is Sugar phosphatase YidA (yidA).